Consider the following 296-residue polypeptide: DNA repair protein complementing XP-A cells homolog (296 aa).

Residues 1–10 (MSAEVSTNES) are compositionally biased toward polar residues. Residues 1-39 (MSAEVSTNESAPPAEKKSKLTNAQKARIERNQAKAQKLR) form a disordered region. Residues 26–39 (ARIERNQAKAQKLR) are compositionally biased toward basic and acidic residues. The Nuclear localization signal motif lies at 26 to 47 (ARIERNQAKAQKLREAKLVSHP). Residues Cys-126, Cys-129, Cys-147, and Cys-150 each contribute to the Zn(2+) site. A zinc finger lies at 126–150 (CLECGDMFADSYLFNNFGHSVCDKC).

It belongs to the XPA family. As to expression, strongly expressed in the central nervous system and muscles.

The protein resides in the nucleus. In terms of biological role, involved in DNA excision repair. Initiates repair by binding to damaged sites with various affinities, depending on the photoproduct and the transcriptional state of the region. The protein is DNA repair protein complementing XP-A cells homolog (Xpac) of Drosophila melanogaster (Fruit fly).